The chain runs to 112 residues: Omega-agatoxin-1A (112 aa).

The N-terminal stretch at 1 to 19 is a signal peptide; it reads MMKFVVFLACLFVAAHSFA. The propeptide occupies 20-36; it reads VEGEEEYFEAEVPELER. Residues 103–109 constitute a propeptide, glu-rich; it reads RSEESER.

Belongs to the neurotoxin 04 (omega-agtx) family. 01 (type I omega-agtx) subfamily. Heterodimer of two subunits, a major chain and a minor chain, linked by a disulfide bond. In terms of processing, proteolytically processed to yield the major and the minor chains. As to expression, expressed by the venom gland.

The protein localises to the secreted. In terms of biological role, omega-agatoxins are antagonists of voltage-gated calcium channels. They block insect neuromuscular transmission presynaptically. This toxin is a blocker of L-type calcium channels (Cav/CACNA1). The polypeptide is Omega-agatoxin-1A (Agelenopsis aperta (North American funnel-web spider)).